The chain runs to 527 residues: Bifunctional pantoate ligase/cytidylate kinase (527 aa).

The interval 1 to 277 is pantoate--beta-alanine ligase; that stretch reads MRQLISPEAL…VGTARLIDNL (277 aa). Residue 27 to 34 participates in ATP binding; it reads MGALHAGH. The active-site Proton donor is histidine 34. Glutamine 58 provides a ligand contact to (R)-pantoate. Glutamine 58 provides a ligand contact to beta-alanine. 147–150 serves as a coordination point for ATP; sequence GEKD. Glutamine 153 serves as a coordination point for (R)-pantoate. ATP is bound by residues valine 176 and 184–187; that span reads LSSR. The cytidylate kinase stretch occupies residues 278 to 527; sequence TLQGRRPIIA…GQTPSPLSLG (250 aa). The interval 507–527 is disordered; sequence GLGDSSPQATPGQTPSPLSLG. The span at 511–527 shows a compositional bias: polar residues; that stretch reads SSPQATPGQTPSPLSLG.

The protein in the N-terminal section; belongs to the pantothenate synthetase family. In the C-terminal section; belongs to the cytidylate kinase family. Type 1 subfamily.

It localises to the cytoplasm. The enzyme catalyses (R)-pantoate + beta-alanine + ATP = (R)-pantothenate + AMP + diphosphate + H(+). It catalyses the reaction CMP + ATP = CDP + ADP. The catalysed reaction is dCMP + ATP = dCDP + ADP. It participates in cofactor biosynthesis; (R)-pantothenate biosynthesis; (R)-pantothenate from (R)-pantoate and beta-alanine: step 1/1. Its function is as follows. Catalyzes the condensation of pantoate with beta-alanine in an ATP-dependent reaction via a pantoyl-adenylate intermediate. Functionally, catalyzes the transfer of a phosphate group from ATP to either CMP or dCMP to form CDP or dCDP and ADP, respectively. The protein is Bifunctional pantoate ligase/cytidylate kinase of Synechococcus elongatus (strain ATCC 33912 / PCC 7942 / FACHB-805) (Anacystis nidulans R2).